A 222-amino-acid chain; its full sequence is Small ribosomal subunit protein uS3 (222 aa).

The region spanning 39–107 (IRKYIKTKFY…QININIAEIK (69 aa)) is the KH type-2 domain.

Belongs to the universal ribosomal protein uS3 family. Part of the 30S ribosomal subunit. Forms a tight complex with proteins S10 and S14.

Binds the lower part of the 30S subunit head. Binds mRNA in the 70S ribosome, positioning it for translation. The chain is Small ribosomal subunit protein uS3 from Carboxydothermus hydrogenoformans (strain ATCC BAA-161 / DSM 6008 / Z-2901).